A 301-amino-acid chain; its full sequence is uncharacterized protein (301 aa).

This is an uncharacterized protein from Methanocaldococcus jannaschii (strain ATCC 43067 / DSM 2661 / JAL-1 / JCM 10045 / NBRC 100440) (Methanococcus jannaschii).